Here is a 1345-residue protein sequence, read N- to C-terminus: Vascular endothelial growth factor receptor 2 (1345 aa).

The first 19 residues, 1–19, serve as a signal peptide directing secretion; sequence MESKALLAVALWFCVETRA. At 20 to 762 the chain is on the extracellular side; the sequence is ASVGLPGDFL…EGAQEKTNLE (743 aa). N-linked (GlcNAc...) asparagine glycosylation is found at Asn46, Asn98, Asn145, Asn160, and Asn247. 7 Ig-like C2-type domains span residues 46–111, 143–209, 226–325, 330–416, 423–542, 549–656, and 665–751; these read NTTL…RDVD, NKNK…INDE, YDVI…TFVR, PFIA…HMVS, PQIG…RVIS, PEIT…LVKQ, and PMIT…TLFI. Cys53 and Cys105 form a disulfide bridge. Cys152 and Cys202 are joined by a disulfide. Cys248 and Cys309 are oxidised to a cystine. 12 N-linked (GlcNAc...) asparagine glycosylation sites follow: Asn320, Asn376, Asn397, Asn509, Asn521, Asn578, Asn611, Asn617, Asn629, Asn673, Asn702, and Asn719. Intrachain disulfides connect Cys447–Cys528 and Cys569–Cys640. Cys686 and Cys735 are disulfide-bonded. Residues 763–783 form a helical membrane-spanning segment; that stretch reads VIILVGTAVIAMFFWLLLVIV. At 784 to 1345 the chain is on the cytoplasmic side; it reads LRTVKRANEG…SGTTLRSPPV (562 aa). Tyr799 carries the phosphotyrosine modification. Residues 832-1160 enclose the Protein kinase domain; the sequence is LKLGKPLGRG…FSELVEHLGN (329 aa). Residues 838–846 and Lys866 each bind ATP; that span reads LGRGAFGQV. Tyr949 bears the Phosphotyrosine; by autocatalysis mark. 2 positions are modified to phosphoserine: Ser980 and Ser982. Tyr994 is modified (phosphotyrosine; by autocatalysis). Cys1022 and Cys1043 are disulfide-bonded. Residue Asp1026 is the Proton acceptor of the active site. Residues Tyr1052, Tyr1057, Tyr1173, and Tyr1212 each carry the phosphotyrosine; by autocatalysis modification. Phosphoserine is present on residues Ser1229 and Ser1233. Thr1236 is modified (phosphothreonine). The segment at 1272 to 1316 is disordered; sequence DRNKLSPSFGGMMPSKSRESVASEGSNQTSGYQSGYHSDDTDTTV. Over residues 1294 to 1307 the composition is skewed to polar residues; sequence SEGSNQTSGYQSGY. Phosphotyrosine; by autocatalysis occurs at positions 1303, 1307, and 1317.

Belongs to the protein kinase superfamily. Tyr protein kinase family. CSF-1/PDGF receptor subfamily. As to quaternary structure, homodimer in the presence of bound dimeric VEGFA, VEGFC or VEGFD ligands; monomeric in the absence of bound ligands. Can also form heterodimers with FLT1/VEGFR1 and KDR/VEGFR2. Interacts (tyrosine phosphorylated) with LFYN, NCK1, PLCG1. Interacts (tyrosine-phosphorylated active form preferentially) with DAB2IP (via C2 domain and active form preferentially); the interaction occurs at the late phase of VEGFA response and inhibits KDR/VEGFR2 activity. Interacts with SHBSH2D2A/TSAD, GRB2, MYOF, CBL and PDCD6. Interacts (via C-terminus domain) with ERN1 (via kinase domain); the interaction is facilitated in a XBP1 isoform 1- and vascular endothelial growth factor (VEGF)-dependent manner in endothelial cells. Interacts (via juxtamembrane region) with chaperone PDCL3 (via thioredoxin fold region); the interaction leads to increased KDR/VEGFR2 abundance through inhibition of its ubiquitination and degradation. Interacts (tyrosine phosphorylated) with CCDC88A/GIV (via SH2-like region); binding requires autophosphorylation of the KDR/VEGFR2 C-terminal region. Interacts with isoform 2 of BSG. Interacts with SLC31A1; this interaction is induced upon VEGFA stimulation leading to SLC31A1 and KDR subsequent co-internalization to early endosomes, thereby activating KDR downstream signaling in endothelial cells. Post-translationally, N-glycosylated. In terms of processing, ubiquitinated. Tyrosine phosphorylation of the receptor promotes its poly-ubiquitination, leading to its degradation via the proteasome or lysosomal proteases. Autophosphorylated on tyrosine residues upon ligand binding. Autophosphorylation occurs in trans, i.e. one subunit of the dimeric receptor phosphorylates tyrosine residues on the other subunit. Phosphorylation at Tyr-949 is important for interaction with SH2D2A/TSAD and VEGFA-mediated reorganization of the actin cytoskeleton. Phosphorylation at Tyr-1173 is important for interaction with PLCG1 and SHB. Phosphorylation at Tyr-1212 is important for interaction with NCK1 and FYN. Dephosphorylated by PTPRJ at Tyr-799, Tyr-949, Tyr-994, Tyr-1052, Tyr-1057, Tyr-1173 and Tyr-1212. Post-translationally, the inhibitory disulfide bond between Cys-1022 and Cys-1043 may serve as a specific molecular switch for H(2)S-induced modification that regulates KDR/VEGFR2 function. As to expression, expressed in endothelial cells (at protein level). Detected in embryonic endothelial cells, as well as hematopoietic stem and progenitor cells. Detected in vascular endothelium. Expressed at high levels in adult heart, lung, kidney, brain and skeletal muscle, but is also expressed at lower levels in most other adult tissues.

The protein localises to the cell junction. It localises to the endoplasmic reticulum. It is found in the cell membrane. Its subcellular location is the cytoplasm. The protein resides in the nucleus. The protein localises to the cytoplasmic vesicle. It localises to the early endosome. It is found in the secreted. The enzyme catalyses L-tyrosyl-[protein] + ATP = O-phospho-L-tyrosyl-[protein] + ADP + H(+). With respect to regulation, present in an inactive conformation in the absence of bound ligand. Binding of VEGFA, VEGFC or VEGFD leads to dimerization and activation by autophosphorylation on tyrosine residues. May be regulated by hydrogen sulfide (H(2)S) levels via a sensitive intracellular disulfide bond. In terms of biological role, tyrosine-protein kinase that acts as a cell-surface receptor for VEGFA, VEGFC and VEGFD. Plays an essential role in the regulation of angiogenesis, vascular development, vascular permeability, and embryonic hematopoiesis. Promotes proliferation, survival, migration and differentiation of endothelial cells. Promotes reorganization of the actin cytoskeleton. Isoforms lacking a transmembrane domain, such as isoform 2, may function as decoy receptors for VEGFA, VEGFC and/or VEGFD. Isoform 2 plays an important role as a negative regulator of VEGFA- and VEGFC-mediated lymphangiogenesis by limiting the amount of free VEGFA and/or VEGFC and by preventing their binding to FLT4. Modulates FLT1 and FLT4 signaling by forming heterodimers. Binding of vascular growth factors to isoform 1 leads to the activation of several signaling cascades. Activation of PLCG1 leads to the production of the cellular signaling molecules diacylglycerol and inositol 1,4,5-trisphosphate and the activation of protein kinase C. Mediates activation of MAPK1/ERK2, MAPK3/ERK1 and the MAP kinase signaling pathway, as well as of the AKT1 signaling pathway. Mediates phosphorylation of PIK3R1, the regulatory subunit of phosphatidylinositol 3-kinase, reorganization of the actin cytoskeleton and activation of PTK2/FAK1. Required for VEGFA-mediated induction of NOS2 and NOS3, leading to the production of the signaling molecule nitric oxide (NO) by endothelial cells. Phosphorylates PLCG1. Promotes phosphorylation of FYN, NCK1, NOS3, PIK3R1, PTK2/FAK1 and SRC. In Mus musculus (Mouse), this protein is Vascular endothelial growth factor receptor 2.